We begin with the raw amino-acid sequence, 481 residues long: U6 small nuclear RNA (adenine-(43)-N(6))-methyltransferase (481 aa).

Residues lysine 82, glycine 108, aspartate 131, threonine 164, and asparagine 184 each contribute to the S-adenosyl-L-methionine site.

Belongs to the methyltransferase superfamily. METTL16/RlmF family. In terms of assembly, self-associates. Interacts with dlc-1; the interaction is direct, and is required for nuclear localization of mett-10.

The protein localises to the nucleus. It catalyses the reaction an adenosine in mRNA + S-adenosyl-L-methionine = an N(6)-methyladenosine in mRNA + S-adenosyl-L-homocysteine + H(+). It carries out the reaction adenosine in U6 snRNA + S-adenosyl-L-methionine = N(6)-methyladenosine in U6 snRNA + S-adenosyl-L-homocysteine + H(+). Functionally, RNA N6-methyltransferase that methylates adenosine residues at the N(6) position of a subset of RNAs and is involved in S-adenosyl-L-methionine homeostasis by regulating splicing of S-adenosylmethionine synthase transcripts (sams-3, sams-4 and sams-5). Able to N6-methylate a subset of mRNAs containing the 5'UACAGAAAC-3' nonamer sequence. Plays a key role in S-adenosyl-L-methionine homeostasis: under rich-diet conditions, catalyzes N6-methylation of S-adenosylmethionine synthase mRNAs (sams-3, sams-4 and sams-5), directly inhibiting splicing and protein production of S-adenosylmethionine synthase. In addition to mRNAs, also able to mediate N6-methylation of U6 small nuclear RNA (U6 snRNA). Required for gamete production, inhibiting germ cell proliferative fate and ensuring germ cell meiotic development. Also promotes progression of the mitotic cell cycle in those germ cells that continue to proliferate. Plays a role in the development of the vulva, somatic gonad and embryo. The sequence is that of U6 small nuclear RNA (adenine-(43)-N(6))-methyltransferase from Caenorhabditis briggsae.